The sequence spans 566 residues: Autophagy-related protein 22-1 (566 aa).

The helical transmembrane segment at 38–58 threads the bilayer; the sequence is YPIAAEVFAVVAVGAFLPVIL. N-linked (GlcNAc...) asparagine glycosylation occurs at asparagine 103. Helical transmembrane passes span 110–130, 146–168, and 179–199; these read SFAM…LVCF, AFAY…VYFL, and SLGC…ANHA. A glycan (N-linked (GlcNAc...) asparagine) is linked at asparagine 200. The next 8 helical transmembrane spans lie at 242–262, 278–298, 351–371, 382–402, 416–436, 451–471, 488–510, and 519–539; these read GYGY…LWLF, VILL…LLWL, FLIS…TAVL, IAIA…AFAW, ILLC…LGFI, WEIY…SSYA, FALY…GWLV, and AFIF…MLDV. Residues 547–566 are disordered; that stretch reads KAMADGEGRGRGTYERVREE.

Belongs to the ATG22 family.

The protein localises to the vacuole membrane. Vacuolar effluxer which mediate the efflux of amino acids resulting from autophagic degradation. The release of autophagic amino acids allows the maintenance of protein synthesis and viability during nitrogen starvation. The polypeptide is Autophagy-related protein 22-1 (ATG22-1) (Phaeosphaeria nodorum (strain SN15 / ATCC MYA-4574 / FGSC 10173) (Glume blotch fungus)).